The following is a 397-amino-acid chain: DnaJ homolog subfamily A member 1 (397 aa).

The J domain maps to 6 to 68 (TYYDVLGVKP…KKRELYDKGG (63 aa)). Lysine 66 bears the N6-acetyllysine mark. Phosphoserine is present on serine 83. A CR-type zinc finger spans residues 121-205 (GATRKLALQK…CNGRKIVREK (85 aa)). Zn(2+) contacts are provided by cysteine 134, cysteine 137, cysteine 150, cysteine 153, cysteine 177, cysteine 180, cysteine 193, and cysteine 196. CXXCXGXG motif repeat units follow at residues 134–141 (CDKCEGRG), 150–157 (CPNCRGTG), 177–184 (CMECQGHG), and 193–200 (CKSCNGRK). Position 335 is a phosphoserine (serine 335). Positions 352–397 (VEETDEMDQVELVDFDPNQERRRHYNGEAYEDDEHHPRGGVQCQTS) are disordered. Over residues 353–365 (EETDEMDQVELVD) the composition is skewed to acidic residues. Position 381 is a phosphotyrosine (tyrosine 381). Cysteine 394 is modified (cysteine methyl ester). Cysteine 394 carries the S-farnesyl cysteine lipid modification. Residues 395–397 (QTS) constitute a propeptide, removed in mature form.

In terms of assembly, identified in a complex with HSPA1B and BAX. Interacts with RNF207.

Its subcellular location is the membrane. The protein resides in the cytoplasm. It is found in the microsome. It localises to the mitochondrion. The protein localises to the nucleus. Its subcellular location is the perinuclear region. In terms of biological role, co-chaperone for HSPA8/Hsc70. Plays a role in protein transport into mitochondria via its role as co-chaperone. Stimulates ATP hydrolysis, but not the folding of unfolded proteins mediated by HSPA1A (in vitro). Promotes apoptosis in response to cellular stress mediated by exposure to anisomycin or UV. Functions as co-chaperone for HSPA1B and negatively regulates the translocation of BAX from the cytosol to mitochondria in response to cellular stress, thereby protecting cells against apoptosis. This Mus musculus (Mouse) protein is DnaJ homolog subfamily A member 1 (Dnaja1).